A 650-amino-acid chain; its full sequence is Acetyl-coenzyme A synthetase (650 aa).

Residues 191–194, Thr-311, and Asn-335 each bind CoA; that span reads RGGR. ATP is bound by residues 387-389, 411-416, Asp-500, and Arg-515; these read GEP and DTWWQT. Ser-523 contributes to the CoA binding site. Arg-526 is a binding site for ATP. Mg(2+) is bound by residues Val-537, His-539, and Val-542. Residue Arg-584 coordinates CoA. The residue at position 609 (Lys-609) is an N6-acetyllysine.

The protein belongs to the ATP-dependent AMP-binding enzyme family. It depends on Mg(2+) as a cofactor. Acetylated. Deacetylation by the SIR2-homolog deacetylase activates the enzyme.

It catalyses the reaction acetate + ATP + CoA = acetyl-CoA + AMP + diphosphate. Its function is as follows. Catalyzes the conversion of acetate into acetyl-CoA (AcCoA), an essential intermediate at the junction of anabolic and catabolic pathways. AcsA undergoes a two-step reaction. In the first half reaction, AcsA combines acetate with ATP to form acetyl-adenylate (AcAMP) intermediate. In the second half reaction, it can then transfer the acetyl group from AcAMP to the sulfhydryl group of CoA, forming the product AcCoA. This Shewanella oneidensis (strain ATCC 700550 / JCM 31522 / CIP 106686 / LMG 19005 / NCIMB 14063 / MR-1) protein is Acetyl-coenzyme A synthetase.